Consider the following 64-residue polypeptide: DNA-directed RNA polymerase subunit Rpo10 (64 aa).

Zn(2+)-binding residues include Cys-7, Cys-10, Cys-45, and Cys-46.

Belongs to the archaeal Rpo10/eukaryotic RPB10 RNA polymerase subunit family. As to quaternary structure, part of the RNA polymerase complex. The cofactor is Zn(2+).

The protein localises to the cytoplasm. It carries out the reaction RNA(n) + a ribonucleoside 5'-triphosphate = RNA(n+1) + diphosphate. Functionally, DNA-dependent RNA polymerase (RNAP) catalyzes the transcription of DNA into RNA using the four ribonucleoside triphosphates as substrates. This Natronomonas pharaonis (strain ATCC 35678 / DSM 2160 / CIP 103997 / JCM 8858 / NBRC 14720 / NCIMB 2260 / Gabara) (Halobacterium pharaonis) protein is DNA-directed RNA polymerase subunit Rpo10.